Consider the following 401-residue polypeptide: Probable sodium/metabolite cotransporter BASS5, chloroplastic (401 aa).

A chloroplast-targeting transit peptide spans 1–46 (MAPNAAVLVRPHIAGVHHLPTGRRLPRLAPPQAVSPPFSRQKGSVV). 9 helical membrane passes run 93 to 113 (TIIP…PPSF), 122 to 142 (APAL…KDFI), 159 to 179 (FIIK…IFNL), 185 to 205 (AGIM…ATFL), 215 to 235 (IVMT…LSYF), 247 to 267 (GMMS…LLLN), 273 to 293 (LCSA…ALCV), 299 to 319 (INIK…LFAF), and 372 to 392 (LVGV…FALV).

Belongs to the bile acid:sodium symporter (BASS) (TC 2.A.28) family.

It is found in the membrane. The protein resides in the plastid. Its subcellular location is the chloroplast envelope. Its function is as follows. May function as sodium-coupled metabolite transporter across the chloroplast envelope. The protein is Probable sodium/metabolite cotransporter BASS5, chloroplastic (BASS5) of Oryza sativa subsp. indica (Rice).